Reading from the N-terminus, the 346-residue chain is MMNRGISVDDCLPKFFKVYLPDDSGDDLELPISFNSFLPKSLPKNVIVRSIYGNIWKVAFRKFCGDSERFVMVNGWKKIVKDEDLKGGEFLEFEFDGSWCFNFCIYGRATCKRLRSSVQITVLDDNDDGFNDDQDYGEEVKSSENFIVLDDDDISDVQDYNEEDTSSEDITALDDADNDDINDVQDYVEEDTSSEDIIVIDDDDDDDDQDYGDDDHADVEKERWRGVKTEKKKKGSSGEHDRQYLDNHMNPFFTVNQHRQIKYNMLRIPTKVITKYGLHFPEFINLIDPLEKNFGKLKRKVKGQTIKGFRSIIRRNNVKLNDKVICELEKEMDGLVREIKVHVIRG.

The segment at residues Pro-13 to Ala-109 is a DNA-binding region (TF-B3). 2 disordered regions span residues Gln-158 to Asp-179 and Thr-192 to Gln-243. The segment covering Thr-192–Ala-217 has biased composition (acidic residues). Basic and acidic residues predominate over residues Asp-218 to Thr-229.

The protein resides in the nucleus. The protein is B3 domain-containing protein At5g60142 of Arabidopsis thaliana (Mouse-ear cress).